Reading from the N-terminus, the 206-residue chain is Small ribosomal subunit protein uS4 (206 aa).

Residues 96–157 enclose the S4 RNA-binding domain; that stretch reads CRLDNVVYRM…KCRNQLRIAQ (62 aa).

Belongs to the universal ribosomal protein uS4 family. As to quaternary structure, part of the 30S ribosomal subunit. Contacts protein S5. The interaction surface between S4 and S5 is involved in control of translational fidelity.

Functionally, one of the primary rRNA binding proteins, it binds directly to 16S rRNA where it nucleates assembly of the body of the 30S subunit. Its function is as follows. With S5 and S12 plays an important role in translational accuracy. This chain is Small ribosomal subunit protein uS4, found in Stutzerimonas stutzeri (strain A1501) (Pseudomonas stutzeri).